The primary structure comprises 387 residues: [LysW]-aminoadipate semialdehyde/glutamate semialdehyde transaminase (387 aa).

Pyridoxal 5'-phosphate-binding positions include 96–97 (GT) and F123. A substrate-binding site is contributed by R126. Residue 207 to 210 (DEVQ) coordinates pyridoxal 5'-phosphate. K236 is modified (N6-(pyridoxal phosphate)lysine). A substrate-binding site is contributed by S264. Residue T265 coordinates pyridoxal 5'-phosphate.

It belongs to the class-III pyridoxal-phosphate-dependent aminotransferase family. LysJ subfamily. In terms of assembly, homodimer. The cofactor is pyridoxal 5'-phosphate.

The protein resides in the cytoplasm. The enzyme catalyses [amino-group carrier protein]-C-terminal-gamma-(L-lysyl)-L-glutamate + 2-oxoglutarate = [amino-group carrier protein]-C-terminal-N-(1-carboxy-5-oxopentan-1-yl)-L-glutamine + L-glutamate. The catalysed reaction is [amino-group carrier protein]-C-terminal-gamma-(L-ornithyl)-L-glutamate + 2-oxoglutarate = [amino-group carrier protein]-C-terminal-gamma-(L-glutamyl-5-semialdehyde)-L-glutamate + L-glutamate. The protein operates within amino-acid biosynthesis; L-lysine biosynthesis via AAA pathway; L-lysine from L-alpha-aminoadipate (Thermus route): step 4/5. It participates in amino-acid biosynthesis; L-arginine biosynthesis. Its function is as follows. Involved in both the arginine and lysine biosynthetic pathways. In Sulfurisphaera tokodaii (strain DSM 16993 / JCM 10545 / NBRC 100140 / 7) (Sulfolobus tokodaii), this protein is [LysW]-aminoadipate semialdehyde/glutamate semialdehyde transaminase.